Reading from the N-terminus, the 389-residue chain is Chalcone synthase 2 (389 aa).

Residue C164 is part of the active site.

This sequence belongs to the thiolase-like superfamily. Chalcone/stilbene synthases family.

The catalysed reaction is (E)-4-coumaroyl-CoA + 3 malonyl-CoA + 3 H(+) = 2',4,4',6'-tetrahydroxychalcone + 3 CO2 + 4 CoA. It functions in the pathway secondary metabolite biosynthesis; flavonoid biosynthesis. In terms of biological role, the primary product of this enzyme is 4,2',4',6'-tetrahydroxychalcone (also termed naringenin-chalcone or chalcone) which can under specific conditions spontaneously isomerize into naringenin. This is Chalcone synthase 2 (CHS2) from Trifolium subterraneum (Subterranean clover).